The following is a 178-amino-acid chain: Protein AUXIN-REGULATED GENE INVOLVED IN ORGAN SIZE (178 aa).

The disordered stretch occupies residues 1-85 (MYLLSPRNGD…GGGGGSNIRE (85 aa)). The span at 10–27 (DEEDEQEEIQELISDDEP) shows a compositional bias: acidic residues. The span at 33–47 (ASCATAASSSSSSGS) shows a compositional bias: low complexity. The segment at 100–151 (FSVESLLLLVCVTASLVILPLVLPPLPPPPSMLMLVPVAMLVLLLALAFMPT) is organ Size Related (OSR) domain. 2 helical membrane passes run 105–125 (LLLLVCVTASLVILPLVLPPL) and 131–151 (MLMLVPVAMLVLLLALAFMPT). Residues 153–178 (TSSSSSAGGGGGGGRNGATTGHAPYL) form a disordered region. A compositionally biased stretch (gly residues) spans 159–168 (AGGGGGGGRN). Low complexity predominate over residues 169 to 178 (GATTGHAPYL).

Belongs to the plant organ size related (OSR) protein family. As to expression, mostly expressed in young tissues such as young roots, young leaves, and seeds. Also present in stems, mature leaves, and spikelets.

Its subcellular location is the membrane. The protein resides in the nucleus. It localises to the cytoplasm. It is found in the endoplasmic reticulum. In terms of biological role, promotes both cell expansion and proliferation-dependent organ growth. This Oryza sativa subsp. japonica (Rice) protein is Protein AUXIN-REGULATED GENE INVOLVED IN ORGAN SIZE (ARGOS).